A 309-amino-acid polypeptide reads, in one-letter code: Aspartate carbamoyltransferase catalytic subunit (309 aa).

The carbamoyl phosphate site is built by Arg-55 and Thr-56. Lys-85 provides a ligand contact to L-aspartate. 3 residues coordinate carbamoyl phosphate: Arg-106, His-135, and Gln-138. Arg-168 and Arg-230 together coordinate L-aspartate. Carbamoyl phosphate is bound by residues Leu-268 and Pro-269.

This sequence belongs to the aspartate/ornithine carbamoyltransferase superfamily. ATCase family. As to quaternary structure, heterododecamer (2C3:3R2) of six catalytic PyrB chains organized as two trimers (C3), and six regulatory PyrI chains organized as three dimers (R2).

It carries out the reaction carbamoyl phosphate + L-aspartate = N-carbamoyl-L-aspartate + phosphate + H(+). It functions in the pathway pyrimidine metabolism; UMP biosynthesis via de novo pathway; (S)-dihydroorotate from bicarbonate: step 2/3. Functionally, catalyzes the condensation of carbamoyl phosphate and aspartate to form carbamoyl aspartate and inorganic phosphate, the committed step in the de novo pyrimidine nucleotide biosynthesis pathway. This is Aspartate carbamoyltransferase catalytic subunit from Vibrio vulnificus (strain CMCP6).